Here is a 165-residue protein sequence, read N- to C-terminus: 2-C-methyl-D-erythritol 2,4-cyclodiphosphate synthase (165 aa).

Positions 13 and 15 each coordinate a divalent metal cation. Residues 13–15 and 39–40 each bind 4-CDP-2-C-methyl-D-erythritol 2-phosphate; these read DRH and HS. An a divalent metal cation-binding site is contributed by histidine 47. 4-CDP-2-C-methyl-D-erythritol 2-phosphate is bound by residues 61-63 and phenylalanine 141; that span reads DIG.

Belongs to the IspF family. Homotrimer. A divalent metal cation is required as a cofactor.

The enzyme catalyses 4-CDP-2-C-methyl-D-erythritol 2-phosphate = 2-C-methyl-D-erythritol 2,4-cyclic diphosphate + CMP. It participates in isoprenoid biosynthesis; isopentenyl diphosphate biosynthesis via DXP pathway; isopentenyl diphosphate from 1-deoxy-D-xylulose 5-phosphate: step 4/6. Involved in the biosynthesis of isopentenyl diphosphate (IPP) and dimethylallyl diphosphate (DMAPP), two major building blocks of isoprenoid compounds. Catalyzes the conversion of 4-diphosphocytidyl-2-C-methyl-D-erythritol 2-phosphate (CDP-ME2P) to 2-C-methyl-D-erythritol 2,4-cyclodiphosphate (ME-CPP) with a corresponding release of cytidine 5-monophosphate (CMP). The chain is 2-C-methyl-D-erythritol 2,4-cyclodiphosphate synthase from Thermotoga neapolitana (strain ATCC 49049 / DSM 4359 / NBRC 107923 / NS-E).